We begin with the raw amino-acid sequence, 810 residues long: Venom phosphodiesterase 2 (810 aa).

The first 23 residues, 1–23 (MIQQKVLFISLVAVTLGLGLGLG), serve as a signal peptide directing secretion. An SMB domain is found at 33–77 (QSWSCSKLRCGEKRIANVLCSCSDDCLEKKDCCTDYKSICKGETS). 9 disulfides stabilise this stretch: Cys-37–Cys-42, Cys-37–Cys-54, Cys-42–Cys-72, Cys-52–Cys-54, Cys-52–Cys-65, Cys-58–Cys-64, Cys-65–Cys-72, Cys-83–Cys-129, and Cys-91–Cys-303. A divalent metal cation-binding residues include Asp-106 and Thr-144. Thr-144 (AMP-threonine intermediate) is an active-site residue. N-linked (GlcNAc...) asparagine glycosylation is found at Asn-175, Asn-218, and Asn-229. Lys-230 contacts AMP. Residues Asp-264, His-268, Asp-311, and His-312 each contribute to the a divalent metal cation site. His-268 is an AMP binding site. 6 disulfide bridges follow: Cys-319–Cys-416, Cys-367–Cys-752, Cys-500–Cys-558, Cys-513–Cys-613, Cys-515–Cys-598, and Cys-721–Cys-731. Residue Asn-364 is glycosylated (N-linked (GlcNAc...) asparagine). His-421 provides a ligand contact to a divalent metal cation. Residues Asn-471, Asn-553, Asn-633, and Asn-704 are each glycosylated (N-linked (GlcNAc...) asparagine).

Belongs to the nucleotide pyrophosphatase/phosphodiesterase family. As to quaternary structure, monomer cleaved in two subunits; disulfide-linked. Is synthesized as a single-chain protein and is subsequently cleaved to form a two-subunit protein held together with disulfide bonds. Requires a divalent metal cation as cofactor. As to expression, expressed by venom gland.

The protein resides in the secreted. It carries out the reaction ADP + H2O = AMP + phosphate + H(+). Hydrolyzes ADP with high activity. Shows weak or no activity on 5'-AMP, 5'-GMP, 3'-AMP, ATP, cAMP, and cGMP. Is devoid of monophosphatase and proteinase activities. Dose-dependently inhibits platelet aggregation induced by ADP (IC(50)=0.99 uM) and collagen (IC(50)=1.4 uM). This is Venom phosphodiesterase 2 from Crotalus adamanteus (Eastern diamondback rattlesnake).